Consider the following 496-residue polypeptide: Lysosomal Pro-X carboxypeptidase (496 aa).

An N-terminal signal peptide occupies residues 1–21 (MGRRALLLLLLSFLAPWTTIA). The propeptide occupies 22–45 (LRPALRALGSLHLPTNPTSLPAVA). Residues N47 and N101 are each glycosylated (N-linked (GlcNAc...) asparagine). The active-site Charge relay system is S179. The interval 194–334 (HMVVGALAAS…QNIFQALNVY (141 aa)) is SKS domain. Cystine bridges form between C215-C372, C233-C310, C264-C343, and C364-C394. Residues N317, N336, and N345 are each glycosylated (N-linked (GlcNAc...) asparagine). N415 carries an N-linked (GlcNAc...) asparagine glycan. Residues D430 and H455 each act as charge relay system in the active site.

Belongs to the peptidase S28 family. In terms of assembly, homodimer.

It is found in the lysosome. The catalysed reaction is Cleavage of a -Pro-|-Xaa bond to release a C-terminal amino acid.. Functionally, cleaves C-terminal amino acids linked to proline in peptides such as angiotensin II, III and des-Arg9-bradykinin. This cleavage occurs at acidic pH, but enzymatic activity is retained with some substrates at neutral pH. The chain is Lysosomal Pro-X carboxypeptidase (PRCP) from Pongo abelii (Sumatran orangutan).